Here is a 1542-residue protein sequence, read N- to C-terminus: ABC multidrug transporter AFR1 (1542 aa).

Disordered regions lie at residues Met1–Asp84 and Ser118–Lys141. Residues Thr18 to Thr41 are compositionally biased toward polar residues. Residues Asp60–Glu69 are compositionally biased toward basic and acidic residues. 2 N-linked (GlcNAc...) asparagine glycosylation sites follow: Asn207 and Asn397. In terms of domain architecture, ABC transporter 1 spans Leu221–Pro473. The next 5 membrane-spanning stretches (helical) occupy residues Phe584–Tyr604, Gly618–Ser638, Val669–Leu689, Gly694–Phe714, and Val726–Ile746. Residue Asn822 is glycosylated (N-linked (GlcNAc...) asparagine). A helical membrane pass occupies residues Phe844–Tyr864. Residues Phe917 to Gly1159 form the ABC transporter 2 domain. Asn923 is a glycosylation site (N-linked (GlcNAc...) asparagine). Gly953–Thr960 serves as a coordination point for ATP. The next 6 membrane-spanning stretches (helical) occupy residues Trp1253 to Leu1273, Val1284 to Gln1304, Met1335 to Phe1355, Phe1365 to Ala1385, Ile1390 to Val1410, and Phe1516 to Phe1536.

This sequence belongs to the ABC transporter superfamily. ABCG family. PDR (TC 3.A.1.205) subfamily.

It localises to the cell membrane. It carries out the reaction itraconazole(in) + ATP + H2O = itraconazole(out) + ADP + phosphate + H(+). It catalyses the reaction voriconazole(in) + ATP + H2O = voriconazole(out) + ADP + phosphate + H(+). The enzyme catalyses fluconazole(in) + ATP + H2O = fluconazole(out) + ADP + phosphate + H(+). In terms of biological role, major pleiotropic ABC efflux transporter that confers resistance to structurally and functionally unrelated compounds including azoles such as fluconazole (FLC), itraconazole (ITC), posaconazole (POS), and voriconazole (VRC). Is also able to efflux the eukaryote protein synthesis inhibitor cycloheximide (CHX). The chain is ABC multidrug transporter AFR1 from Cryptococcus deuterogattii (strain R265) (Cryptococcus gattii VGII (strain R265)).